The following is a 199-amino-acid chain: Adenylyl-sulfate kinase (199 aa).

The disordered stretch occupies residues M1–K22. G34–S41 contacts ATP. S108 (phosphoserine intermediate) is an active-site residue.

This sequence belongs to the APS kinase family.

It carries out the reaction adenosine 5'-phosphosulfate + ATP = 3'-phosphoadenylyl sulfate + ADP + H(+). It functions in the pathway sulfur metabolism; hydrogen sulfide biosynthesis; sulfite from sulfate: step 2/3. Functionally, catalyzes the synthesis of activated sulfate. In Staphylococcus epidermidis (strain ATCC 12228 / FDA PCI 1200), this protein is Adenylyl-sulfate kinase.